Here is a 105-residue protein sequence, read N- to C-terminus: Large ribosomal subunit protein uL24 (105 aa).

It belongs to the universal ribosomal protein uL24 family. Part of the 50S ribosomal subunit.

Its function is as follows. One of two assembly initiator proteins, it binds directly to the 5'-end of the 23S rRNA, where it nucleates assembly of the 50S subunit. Functionally, one of the proteins that surrounds the polypeptide exit tunnel on the outside of the subunit. This Mycolicibacterium vanbaalenii (strain DSM 7251 / JCM 13017 / BCRC 16820 / KCTC 9966 / NRRL B-24157 / PYR-1) (Mycobacterium vanbaalenii) protein is Large ribosomal subunit protein uL24.